A 148-amino-acid chain; its full sequence is Large ribosomal subunit protein bL9 (148 aa).

It belongs to the bacterial ribosomal protein bL9 family.

In terms of biological role, binds to the 23S rRNA. The polypeptide is Large ribosomal subunit protein bL9 (Listeria welshimeri serovar 6b (strain ATCC 35897 / DSM 20650 / CCUG 15529 / CIP 8149 / NCTC 11857 / SLCC 5334 / V8)).